A 149-amino-acid polypeptide reads, in one-letter code: 3-hydroxyacyl-[acyl-carrier-protein] dehydratase FabZ (149 aa).

Histidine 53 is an active-site residue.

The protein belongs to the thioester dehydratase family. FabZ subfamily.

It is found in the cytoplasm. The catalysed reaction is a (3R)-hydroxyacyl-[ACP] = a (2E)-enoyl-[ACP] + H2O. Functionally, involved in unsaturated fatty acids biosynthesis. Catalyzes the dehydration of short chain beta-hydroxyacyl-ACPs and long chain saturated and unsaturated beta-hydroxyacyl-ACPs. The sequence is that of 3-hydroxyacyl-[acyl-carrier-protein] dehydratase FabZ from Polynucleobacter necessarius subsp. necessarius (strain STIR1).